A 287-amino-acid chain; its full sequence is Pirin-1 (287 aa).

N-acetylthreonine is present on threonine 2.

The protein belongs to the pirin family. Interacts with the G protein alpha-1 subunit GPA1. Interacts with NFYB6 and NFYB9.

The protein localises to the nucleus. Functionally, involved in abscisic acid signal transduction. Plays a role in seed germination and early seedling development. Involved in the blue light (BL) signaling. This chain is Pirin-1 (PRN1), found in Arabidopsis thaliana (Mouse-ear cress).